The following is a 228-amino-acid chain: MSYVFVNDSSQTNVPLLQACIDGDFTYSKRLLESGFDPNIRDSRGRTGLHLAAARGNVDICQLLHKFGADPLATDYQGNTALHLCGHVDTIQFLVSNGLKIDICNHQGATPLVLAKRRGVNKDVIRLLESLEEQEVKGFNRGTHSKLETMQTAESESAMESHSLLNPNLQQGEGVLSSFRTTWQEFVEDLGFWRVLLLILVIALLSLGIAYYVSGVLPFVDNQPGLVH.

ANK repeat units lie at residues 11-40, 44-74, 77-103, and 107-138; these read QTNV…DPNI, RGRT…PLAT, QGNT…KIDI, and QGAT…EVKG. A helical transmembrane segment spans residues 195–215; the sequence is VLLLILVIALLSLGIAYYVSG.

Its subcellular location is the membrane. The sequence is that of Ankyrin repeat domain-containing protein 46 (Ankrd46) from Rattus norvegicus (Rat).